We begin with the raw amino-acid sequence, 2153 residues long: Genome polyprotein (2153 aa).

The N-myristoyl glycine; by host moiety is linked to residue G2. Residues G2 to T1466 are Cytoplasmic-facing. Positions P565–V582 are amphipathic alpha-helix. Active-site for protease 2A activity residues include H871 and D888. 2 residues coordinate Zn(2+): C905 and C907. C959 serves as the catalytic For protease 2A activity. Zn(2+) is bound by residues C965 and H967. The interval S1091–Q1160 is membrane-binding. The segment at S1091 to T1224 is oligomerization. The interval G1112–S1116 is RNA-binding. One can recognise an SF3 helicase domain in the interval K1186–V1346. Zn(2+)-binding residues include C1353, C1364, and C1369. The segment at C1353–C1369 adopts a C4-type; degenerate zinc-finger fold. The interval E1396–V1403 is RNA-binding. Residues M1407–Q1412 are oligomerization. An intramembrane segment occupies I1467–Y1482. The Cytoplasmic portion of the chain corresponds to K1483–F2153. Y1492 is subject to O-(5'-phospho-RNA)-tyrosine. One can recognise a Peptidase C3 domain in the interval G1511 to F1689. Residues H1550, E1581, and C1657 each act as for protease 3C activity in the active site. The 114-residue stretch at D1921–A2034 folds into the RdRp catalytic domain. Mg(2+) contacts are provided by D1927 and D2020.

It belongs to the picornaviruses polyprotein family. Interacts with capsid protein VP1 and capsid protein VP3 to form heterotrimeric protomers. As to quaternary structure, interacts with capsid protein VP0, and capsid protein VP3 to form heterotrimeric protomers. Five protomers subsequently associate to form pentamers which serve as building blocks for the capsid. Interacts with capsid protein VP2, capsid protein VP3 and capsid protein VP4 following cleavage of capsid protein VP0. In terms of assembly, interacts with capsid protein VP1 and capsid protein VP3 in the mature capsid. Interacts with capsid protein VP0 and capsid protein VP1 to form heterotrimeric protomers. Five protomers subsequently associate to form pentamers which serve as building blocks for the capsid. Interacts with capsid protein VP4 in the mature capsid. Interacts with protein 2C; this interaction may be important for virion morphogenesis. As to quaternary structure, interacts with capsid protein VP1 and capsid protein VP3. In terms of assembly, homodimer. Homohexamer; forms a hexameric ring structure with 6-fold symmetry characteristic of AAA+ ATPases. Interacts (via N-terminus) with host RTN3 (via reticulon domain); this interaction is important for viral replication. Interacts with capsid protein VP3; this interaction may be important for virion morphogenesis. As to quaternary structure, interacts with protein 3CD. In terms of assembly, homodimer. Interacts with host GBF1. Interacts (via GOLD domain) with host ACBD3 (via GOLD domain); this interaction allows the formation of a viral protein 3A/ACBD3 heterotetramer with a 2:2 stoichiometry, which will stimulate the recruitment of host PI4KB in order to synthesize PI4P at the viral RNA replication sites. Interacts with RNA-directed RNA polymerase. As to quaternary structure, interacts with protein 3AB and with RNA-directed RNA polymerase. In terms of assembly, interacts with Viral protein genome-linked and with protein 3CD. Requires Mg(2+) as cofactor. Specific enzymatic cleavages in vivo by the viral proteases yield processing intermediates and the mature proteins. Post-translationally, myristoylation is required for the formation of pentamers during virus assembly. Further assembly of 12 pentamers and a molecule of genomic RNA generates the provirion. In terms of processing, during virion maturation, immature virions are rendered infectious following cleavage of VP0 into VP4 and VP2. This maturation seems to be an autocatalytic event triggered by the presence of RNA in the capsid and it is followed by a conformational change infectious virion. Myristoylation is required during RNA encapsidation and formation of the mature virus particle. Post-translationally, VPg is uridylylated by the polymerase into VPg-pUpU. This acts as a nucleotide-peptide primer for the genomic RNA replication.

The protein resides in the virion. It is found in the host cytoplasm. The protein localises to the host cytoplasmic vesicle membrane. It localises to the host nucleus. It carries out the reaction a ribonucleoside 5'-triphosphate + H2O = a ribonucleoside 5'-diphosphate + phosphate + H(+). The catalysed reaction is Selective cleavage of Tyr-|-Gly bond in the picornavirus polyprotein.. It catalyses the reaction RNA(n) + a ribonucleoside 5'-triphosphate = RNA(n+1) + diphosphate. The enzyme catalyses Selective cleavage of Gln-|-Gly bond in the poliovirus polyprotein. In other picornavirus reactions Glu may be substituted for Gln, and Ser or Thr for Gly.. With respect to regulation, replication or transcription is subject to high level of random mutations by the nucleotide analog ribavirin. Forms an icosahedral capsid of pseudo T=3 symmetry with capsid proteins VP2 and VP3. The capsid is 300 Angstroms in diameter, composed of 60 copies of each capsid protein and enclosing the viral positive strand RNA genome. Capsid protein VP1 mainly forms the vertices of the capsid. Capsid protein VP1 interacts with host cell receptor to provide virion attachment to target host cells. This attachment induces virion internalization. Tyrosine kinases are probably involved in the entry process. After binding to its receptor, the capsid undergoes conformational changes. Capsid protein VP1 N-terminus (that contains an amphipathic alpha-helix) and capsid protein VP4 are externalized. Together, they shape a pore in the host membrane through which viral genome is translocated to host cell cytoplasm. In terms of biological role, forms an icosahedral capsid of pseudo T=3 symmetry with capsid proteins VP2 and VP3. The capsid is 300 Angstroms in diameter, composed of 60 copies of each capsid protein and enclosing the viral positive strand RNA genome. Its function is as follows. Lies on the inner surface of the capsid shell. After binding to the host receptor, the capsid undergoes conformational changes. Capsid protein VP4 is released, Capsid protein VP1 N-terminus is externalized, and together, they shape a pore in the host membrane through which the viral genome is translocated into the host cell cytoplasm. Functionally, component of immature procapsids, which is cleaved into capsid proteins VP4 and VP2 after maturation. Allows the capsid to remain inactive before the maturation step. Cysteine protease that cleaves viral polyprotein and specific host proteins. It is responsible for the autocatalytic cleavage between the P1 and P2 regions, which is the first cleavage occurring in the polyprotein. Also cleaves the host translation initiation factor EIF4G1, in order to shut down the capped cellular mRNA translation. Inhibits the host nucleus-cytoplasm protein and RNA trafficking by cleaving host members of the nuclear pores. Counteracts stress granule formation probably by antagonizing its assembly or promoting its dissassembly. In terms of biological role, plays an essential role in the virus replication cycle by acting as a viroporin. Creates a pore in the host endoplasmic reticulum and as a consequence releases Ca2+ in the cytoplasm of infected cell. In turn, high levels of cytoplasmic calcium may trigger membrane trafficking and transport of viral ER-associated proteins to viroplasms, sites of viral genome replication. Its function is as follows. Induces and associates with structural rearrangements of intracellular membranes. Displays RNA-binding, nucleotide binding and NTPase activities. May play a role in virion morphogenesis and viral RNA encapsidation by interacting with the capsid protein VP3. Functionally, localizes the viral replication complex to the surface of membranous vesicles. It inhibits host cell endoplasmic reticulum-to-Golgi apparatus transport and causes the disassembly of the Golgi complex, possibly through GBF1 interaction. This would result in depletion of MHC, trail receptors and IFN receptors at the host cell surface. Plays an essential role in viral RNA replication by recruiting ACBD3 and PI4KB at the viral replication sites, thereby allowing the formation of the rearranged membranous structures where viral replication takes place. Acts as a primer for viral RNA replication and remains covalently bound to viral genomic RNA. VPg is uridylylated prior to priming replication into VPg-pUpU. The oriI viral genomic sequence may act as a template for this. The VPg-pUpU is then used as primer on the genomic RNA poly(A) by the RNA-dependent RNA polymerase to replicate the viral genome. During genome replication, the VPg-RNA linkage is removed by the host TDP2, thereby accelerating replication. During the late stage of the replication cycle, host TDP2 is excluded from sites of viral RNA synthesis and encapsidation, allowing for the generation of progeny virions. In terms of biological role, involved in the viral replication complex and viral polypeptide maturation. It exhibits protease activity with a specificity and catalytic efficiency that is different from protease 3C. Protein 3CD lacks polymerase activity. Protein 3CD binds to the 5'UTR of the viral genome. Its function is as follows. Major viral protease that mediates proteolytic processing of the polyprotein. Cleaves host EIF5B, contributing to host translation shutoff. Also cleaves host PABPC1, contributing to host translation shutoff. Cleaves host NLRP1, triggers host N-glycine-mediated degradation of the autoinhibitory NLRP1 N-terminal fragment. Functionally, replicates the viral genomic RNA on the surface of intracellular membranes. May form linear arrays of subunits that propagate along a strong head-to-tail interaction called interface-I. Covalently attaches UMP to a tyrosine of VPg, which is used to prime RNA synthesis. The positive stranded RNA genome is first replicated at virus induced membranous vesicles, creating a dsRNA genomic replication form. This dsRNA is then used as template to synthesize positive stranded RNA genomes. ss(+)RNA genomes are either translated, replicated or encapsidated. This is Genome polyprotein from Human rhinovirus 16 (HRV-16).